We begin with the raw amino-acid sequence, 453 residues long: MSQSPKVGFVSLGCPKALVDSEQIITQLRAEGYEISGTYDGADLVVVNTCGFIDEAVQESLDAIGEALTENGKVIVTGCLGAKSSASGSNLIEEVHPKVLAVTGPHAVGEVMQAVHSHLPKPHDPFVDLVPAAGIKLTPRHYAYLKISEGCNHRCTFCIIPSMRGDLVSRPVAEVMLEAENLFKSGVKELLVISQDTSAYGVDVKYRTGFWNGKPIKTRMTDLVAALGELAAQYGAWVRLHYVYPYPSVDEVIPLMAEGPFKGHVLPYLDVPFQHAHPDVLKRMKRPANAEKVLERVQKWREICPDLTIRSTFIAGFPGETEAQFETLLDFIREAELDRVGCFAYSPVEGATANELDGALPDDVREERRARFMEVAEEVSARRMQRKVGKTLKVLIDEVGNEGGIGRTAADAPEIDGVVYVEPAAKASKRYKVGDFVSVKITGADGHDLWGEV.

In terms of domain architecture, MTTase N-terminal spans 5–120; that stretch reads PKVGFVSLGC…VMQAVHSHLP (116 aa). 6 residues coordinate [4Fe-4S] cluster: C14, C50, C79, C151, C155, and C158. One can recognise a Radical SAM core domain in the interval 137–382; that stretch reads LTPRHYAYLK…MEVAEEVSAR (246 aa). Residues 385–453 form the TRAM domain; the sequence is QRKVGKTLKV…ADGHDLWGEV (69 aa).

This sequence belongs to the methylthiotransferase family. RimO subfamily. [4Fe-4S] cluster serves as cofactor.

The protein localises to the cytoplasm. It carries out the reaction L-aspartate(89)-[ribosomal protein uS12]-hydrogen + (sulfur carrier)-SH + AH2 + 2 S-adenosyl-L-methionine = 3-methylsulfanyl-L-aspartate(89)-[ribosomal protein uS12]-hydrogen + (sulfur carrier)-H + 5'-deoxyadenosine + L-methionine + A + S-adenosyl-L-homocysteine + 2 H(+). In terms of biological role, catalyzes the methylthiolation of an aspartic acid residue of ribosomal protein uS12. The polypeptide is Ribosomal protein uS12 methylthiotransferase RimO (Burkholderia vietnamiensis (strain G4 / LMG 22486) (Burkholderia cepacia (strain R1808))).